A 233-amino-acid polypeptide reads, in one-letter code: UPF0502 protein YPTS_2082 (233 aa).

This sequence belongs to the UPF0502 family.

The polypeptide is UPF0502 protein YPTS_2082 (Yersinia pseudotuberculosis serotype IB (strain PB1/+)).